The sequence spans 274 residues: Formamidopyrimidine-DNA glycosylase (274 aa).

The active-site Schiff-base intermediate with DNA is Pro-2. The Proton donor role is filled by Glu-3. Lys-60 serves as the catalytic Proton donor; for beta-elimination activity. Residues His-93 and Arg-112 each contribute to the DNA site. The segment at 240–274 (FVYGRKGEPCKRCGTPIEKTVVAGRGTHYCPRCQR) adopts an FPG-type zinc-finger fold. Residue Arg-264 is the Proton donor; for delta-elimination activity of the active site.

The protein belongs to the FPG family. As to quaternary structure, monomer. Zn(2+) serves as cofactor.

The enzyme catalyses Hydrolysis of DNA containing ring-opened 7-methylguanine residues, releasing 2,6-diamino-4-hydroxy-5-(N-methyl)formamidopyrimidine.. It catalyses the reaction 2'-deoxyribonucleotide-(2'-deoxyribose 5'-phosphate)-2'-deoxyribonucleotide-DNA = a 3'-end 2'-deoxyribonucleotide-(2,3-dehydro-2,3-deoxyribose 5'-phosphate)-DNA + a 5'-end 5'-phospho-2'-deoxyribonucleoside-DNA + H(+). Its function is as follows. Involved in base excision repair of DNA damaged by oxidation or by mutagenic agents. Acts as a DNA glycosylase that recognizes and removes damaged bases. Has a preference for oxidized purines, such as 7,8-dihydro-8-oxoguanine (8-oxoG). Has AP (apurinic/apyrimidinic) lyase activity and introduces nicks in the DNA strand. Cleaves the DNA backbone by beta-delta elimination to generate a single-strand break at the site of the removed base with both 3'- and 5'-phosphates. This is Formamidopyrimidine-DNA glycosylase from Geobacillus kaustophilus (strain HTA426).